The sequence spans 473 residues: Chromosomal replication initiator protein DnaA (473 aa).

Residues 1-76 are domain I, interacts with DnaA modulators; sequence MNYHSTNVNE…RTVLGRVIGP (76 aa). The segment at 76–135 is domain II; it reads PNASLQYNALVDNSSPKYPGTVTLAGCADGGQAAEQFDVNLLHRHMPNAATHSEAQDFDT. A domain III, AAA+ region region spans residues 136–353; sequence QLNSRLNFRN…GTLVSLITNS (218 aa). ATP contacts are provided by Gly181, Gly183, Lys184, and Thr185. A domain IV, binds dsDNA region spans residues 354–473; that stretch reads VVVGKEIDLT…VERAEQLIAN (120 aa).

Belongs to the DnaA family. Oligomerizes as a right-handed, spiral filament on DNA at oriC.

The protein localises to the cytoplasm. In terms of biological role, plays an essential role in the initiation and regulation of chromosomal replication. ATP-DnaA binds to the origin of replication (oriC) to initiate formation of the DNA replication initiation complex once per cell cycle. Binds the DnaA box (a 9 base pair repeat at the origin) and separates the double-stranded (ds)DNA. Forms a right-handed helical filament on oriC DNA; dsDNA binds to the exterior of the filament while single-stranded (ss)DNA is stabiized in the filament's interior. The ATP-DnaA-oriC complex binds and stabilizes one strand of the AT-rich DNA unwinding element (DUE), permitting loading of DNA polymerase. After initiation quickly degrades to an ADP-DnaA complex that is not apt for DNA replication. Binds acidic phospholipids. The polypeptide is Chromosomal replication initiator protein DnaA (Porphyromonas gingivalis (strain ATCC 33277 / DSM 20709 / CIP 103683 / JCM 12257 / NCTC 11834 / 2561)).